Reading from the N-terminus, the 1192-residue chain is Integrator complex subunit 2 (1192 aa).

Residues 420-436 (FVSLSFCMLLAFSTLVS) traverse the membrane as a helical segment.

Belongs to the Integrator subunit 2 family. In terms of assembly, component of the Integrator complex, composed of core subunits INTS1, INTS2, INTS3, INTS4, INTS5, INTS6, INTS7, INTS8, INTS9/RC74, INTS10, INTS11/CPSF3L, INTS12, INTS13, INTS14 and INTS15. The core complex associates with protein phosphatase 2A subunits PPP2CA and PPP2R1A, to form the Integrator-PP2A (INTAC) complex.

It is found in the nucleus. It localises to the nucleus membrane. The protein localises to the cytoplasm. In terms of biological role, component of the integrator complex, a multiprotein complex that terminates RNA polymerase II (Pol II) transcription in the promoter-proximal region of genes. The integrator complex provides a quality checkpoint during transcription elongation by driving premature transcription termination of transcripts that are unfavorably configured for transcriptional elongation: the complex terminates transcription by (1) catalyzing dephosphorylation of the C-terminal domain (CTD) of Pol II subunit POLR2A/RPB1 and SUPT5H/SPT5, (2) degrading the exiting nascent RNA transcript via endonuclease activity and (3) promoting the release of Pol II from bound DNA. The integrator complex is also involved in terminating the synthesis of non-coding Pol II transcripts, such as enhancer RNAs (eRNAs), small nuclear RNAs (snRNAs), telomerase RNAs and long non-coding RNAs (lncRNAs). The polypeptide is Integrator complex subunit 2 (INTS2) (Gallus gallus (Chicken)).